Reading from the N-terminus, the 399-residue chain is Enoyl-[acyl-carrier-protein] reductase [NADH] 2 (399 aa).

Residues 48–53 (GASSGF), 75–76 (FE), 112–113 (DA), and 141–142 (LA) contribute to the NAD(+) site. Tyr-227 provides a ligand contact to substrate. Catalysis depends on Tyr-237, which acts as the Proton donor. NAD(+) contacts are provided by residues Lys-246 and 275-277 (LVT).

It belongs to the TER reductase family. As to quaternary structure, monomer.

It catalyses the reaction a 2,3-saturated acyl-[ACP] + NAD(+) = a (2E)-enoyl-[ACP] + NADH + H(+). The protein operates within lipid metabolism; fatty acid biosynthesis. In terms of biological role, involved in the final reduction of the elongation cycle of fatty acid synthesis (FAS II). Catalyzes the reduction of a carbon-carbon double bond in an enoyl moiety that is covalently linked to an acyl carrier protein (ACP). This is Enoyl-[acyl-carrier-protein] reductase [NADH] 2 from Vibrio parahaemolyticus serotype O3:K6 (strain RIMD 2210633).